The following is a 477-amino-acid chain: Inositol phosphosphingolipids phospholipase C (477 aa).

The Cytoplasmic segment spans residues 1 to 398; that stretch reads MYNRKDRDVH…QRQKFFRGLH (398 aa). Glu100 is a binding site for Mg(2+). Catalysis depends on His334, which acts as the Proton acceptor. The chain crosses the membrane as a helical span at residues 399–417; the sequence is FWASILLLIASLVVTTFTA. The Mitochondrial intermembrane segment spans residues 418 to 424; sequence NKAGWSS. The chain crosses the membrane as a helical span at residues 425 to 449; the sequence is IFWVLFAIAVSISGTIDGAISFLFG. Residues 450–477 are Cytoplasmic-facing; the sequence is RSEIRALIEVEQEVLDAEHHLQTFLSEK.

Belongs to the neutral sphingomyelinase family. Mg(2+) is required as a cofactor.

It is found in the endoplasmic reticulum membrane. Its subcellular location is the mitochondrion outer membrane. It carries out the reaction an N-acyl-(4R)-4-hydroxysphinganine-1-phosphoinositol + H2O = 1D-myo-inositol 1-phosphate + an N-acyl-(4R)-4-hydroxysphinganine + H(+). It catalyses the reaction a mannosylinositol-1-phospho-N-acyl-sphingoid base + H2O = mannosylinositol-1-phosphate + an N-acyl-sphingoid base + H(+). The enzyme catalyses an inositol phosphomannosylinositol-1-phospho-N-acyl-(4R)-4-hydroxysphinganine + H2O = mannosyldiinositol-1-phosphate + an N-acyl-(4R)-4-hydroxysphinganine + H(+). It participates in lipid metabolism; sphingolipid metabolism. With respect to regulation, activated through localization to mitochondria in specific growth phases. Responsible for the hydrolysis of the phosphosphingolipids (IPS), inositol phosphorylceramide (IPC), mannosylinositol phosphorylceramide (MIPC), and mannosyldiinositol phosphorylceramide (M(IP)2C). Regulates sphingolipid metabolism in mitochondria, especially the formation of alpha-hydroxylated very long chain phytoceramides. The generated ceramides contribute to the normal function of mitochondria. Also active on sphingomyelin (SM), but this activity is probably not physiologically relevant. The chain is Inositol phosphosphingolipids phospholipase C from Saccharomyces cerevisiae (strain ATCC 204508 / S288c) (Baker's yeast).